A 482-amino-acid chain; its full sequence is Complement C1r subcomponent-like protein (482 aa).

Residues Met-1–Ala-43 form the signal peptide. The CUB domain occupies Ser-44 to Val-166. 2 cysteine pairs are disulfide-bonded: Cys-97-Cys-115 and Cys-190-Cys-223. In terms of domain architecture, Sushi spans Val-166–Pro-225. In terms of domain architecture, Peptidase S1 spans Thr-240–Glu-479. Active-site charge relay system residues include His-278 and Asp-334. N-linked (GlcNAc...) asparagine glycosylation is present at Asn-358. Disulfide bonds link Cys-397–Cys-416 and Cys-427–Cys-457. Residue Ser-431 is the Charge relay system of the active site.

It belongs to the peptidase S1 family. In terms of tissue distribution, expressed in liver (at protein level).

It is found in the secreted. Mediates the proteolytic cleavage of HP/haptoglobin in the endoplasmic reticulum. The polypeptide is Complement C1r subcomponent-like protein (C1rl) (Mus musculus (Mouse)).